The chain runs to 161 residues: SsrA-binding protein (161 aa).

This sequence belongs to the SmpB family.

The protein localises to the cytoplasm. In terms of biological role, required for rescue of stalled ribosomes mediated by trans-translation. Binds to transfer-messenger RNA (tmRNA), required for stable association of tmRNA with ribosomes. tmRNA and SmpB together mimic tRNA shape, replacing the anticodon stem-loop with SmpB. tmRNA is encoded by the ssrA gene; the 2 termini fold to resemble tRNA(Ala) and it encodes a 'tag peptide', a short internal open reading frame. During trans-translation Ala-aminoacylated tmRNA acts like a tRNA, entering the A-site of stalled ribosomes, displacing the stalled mRNA. The ribosome then switches to translate the ORF on the tmRNA; the nascent peptide is terminated with the 'tag peptide' encoded by the tmRNA and targeted for degradation. The ribosome is freed to recommence translation, which seems to be the essential function of trans-translation. The polypeptide is SsrA-binding protein (Haemophilus influenzae (strain 86-028NP)).